A 95-amino-acid chain; its full sequence is Histone-like DNA-binding protein (95 aa).

Belongs to the bacterial histone-like protein family.

The sequence is that of Histone-like DNA-binding protein from Rickettsia montanensis.